The primary structure comprises 270 residues: Gap junction beta-3 protein (270 aa).

The Cytoplasmic portion of the chain corresponds to 1 to 20; that stretch reads MDWKKLQDLLSGVNQYSTAF. A helical membrane pass occupies residues 21 to 40; sequence GRIWLSVVFVFRVLVYVVAA. Residues 41–75 are Extracellular-facing; it reads ERVWGDEQKDFDCNTRQPGCTNVCYDNFFPISNIR. A helical transmembrane segment spans residues 76 to 98; that stretch reads LWALQLIFVTCPSMLVILHVAYR. Residues 99 to 126 are Cytoplasmic-facing; the sequence is EERERKHRQKHGEQCAKLYSHPGKKHGG. Residues 127–149 form a helical membrane-spanning segment; that stretch reads LWWTYLFSLIFKLIIELVFLYVL. The Extracellular segment spans residues 150–188; it reads HTLWHGFTMPRLVQCASIVPCPNTVDCYIARPTEKKVFT. A helical transmembrane segment spans residues 189 to 211; the sequence is YFMVGASAVCIILTICEICYLIF. The Cytoplasmic portion of the chain corresponds to 212–270; that stretch reads HRIMRGISKGKSTKSISSPKSSSRASTCRCHHKLLESGDPEADPASEKLQASAPSLTPI. The segment at 246-270 is disordered; sequence LESGDPEADPASEKLQASAPSLTPI.

It belongs to the connexin family. Beta-type (group I) subfamily. In terms of assembly, a connexon is composed of a hexamer of connexins. Interacts with CNST.

The protein resides in the cell membrane. It localises to the cell junction. It is found in the gap junction. In terms of biological role, one gap junction consists of a cluster of closely packed pairs of transmembrane channels, the connexons, through which materials of low MW diffuse from one cell to a neighboring cell. This chain is Gap junction beta-3 protein (Gjb3), found in Mus musculus (Mouse).